A 275-amino-acid polypeptide reads, in one-letter code: NH(3)-dependent NAD(+) synthetase (275 aa).

46 to 53 provides a ligand contact to ATP; the sequence is GISGGQDS. Residue aspartate 52 coordinates Mg(2+). Arginine 140 contributes to the deamido-NAD(+) binding site. Residue threonine 160 coordinates ATP. Glutamate 165 is a Mg(2+) binding site. The deamido-NAD(+) site is built by lysine 173 and aspartate 180. ATP is bound by residues lysine 189 and threonine 211. Residue 260 to 261 coordinates deamido-NAD(+); that stretch reads HK.

It belongs to the NAD synthetase family. Homodimer.

It catalyses the reaction deamido-NAD(+) + NH4(+) + ATP = AMP + diphosphate + NAD(+) + H(+). It functions in the pathway cofactor biosynthesis; NAD(+) biosynthesis; NAD(+) from deamido-NAD(+) (ammonia route): step 1/1. Functionally, catalyzes the ATP-dependent amidation of deamido-NAD to form NAD. Uses ammonia as a nitrogen source. The protein is NH(3)-dependent NAD(+) synthetase of Escherichia coli (strain K12 / MC4100 / BW2952).